A 75-amino-acid chain; its full sequence is Probable pilin MJ0431 (75 aa).

Positions 1-15 are excised as a propeptide; that stretch reads MGKMKILKKLLSKKG. Positions 16-24 match the QXSXEXXXL motif; that stretch reads QLSMEVGVL.

Post-translationally, the N-terminus is cleaved by the prepilin peptidase EppA, which recognizes the class III signal sequence.

It localises to the secreted. The protein resides in the cell surface. It is found in the fimbrium. This is Probable pilin MJ0431 from Methanocaldococcus jannaschii (strain ATCC 43067 / DSM 2661 / JAL-1 / JCM 10045 / NBRC 100440) (Methanococcus jannaschii).